Here is a 106-residue protein sequence, read N- to C-terminus: Nucleoid-associated protein XOO1065 (106 aa).

Over residues 80–89 the composition is skewed to basic and acidic residues; that stretch reads KIDAESKDRM. The segment at 80–106 is disordered; that stretch reads KIDAESKDRMGSATAGMQLPPGMKLPF.

This sequence belongs to the YbaB/EbfC family. Homodimer.

It localises to the cytoplasm. The protein localises to the nucleoid. Its function is as follows. Binds to DNA and alters its conformation. May be involved in regulation of gene expression, nucleoid organization and DNA protection. The chain is Nucleoid-associated protein XOO1065 from Xanthomonas oryzae pv. oryzae (strain KACC10331 / KXO85).